The primary structure comprises 501 residues: E3 ubiquitin-protein ligase TRIM35 (501 aa).

Residue Met1 is modified to N-acetylmethionine. The residue at position 8 (Ser8) is a Phosphoserine. The RING-type zinc finger occupies 21–61 (CAVCYDPFRDAVTLRCGHNFCRRCVSGCWEVQTTPSCPVCK). The B box-type zinc finger occupies 96–137 (RSPRPCRAHRAPLTLFCLEDKELLCCACQADARHQEHRVQPI). Cys101, His104, Cys123, and His129 together coordinate Zn(2+). Positions 200–252 (VEEQATLDAMKEESRKKHLQAEEKMKQLAEQTEALAREIERLQMEMKEDDMTF) form a coiled coil. Positions 284–495 (LESLQYRVWK…LRICHLRVSI (212 aa)) constitute a B30.2/SPRY domain.

This sequence belongs to the TRIM/RBCC family. As to quaternary structure, interacts with PKM isoform M2, but not isoform M1; this interaction may compete with that between PKM and FGFR1, and hence reduces FGFR1-dependent tyrosine phosphorylation of PKM. Interacts with IRF7; this interaction promotes IRF7 proteasomal degradation. Interacts with TRAF3; this interaction promotes TRAF3 activation. In terms of tissue distribution, widely expressed. Highly expressed in brain, heart, kidney, spleen, skeletal muscle, lung and thymus. Lower expression found in stomach, large intestine and bone marrow.

It is found in the cytoplasm. Its subcellular location is the nucleus. It carries out the reaction S-ubiquitinyl-[E2 ubiquitin-conjugating enzyme]-L-cysteine + [acceptor protein]-L-lysine = [E2 ubiquitin-conjugating enzyme]-L-cysteine + N(6)-ubiquitinyl-[acceptor protein]-L-lysine.. It functions in the pathway protein modification; protein ubiquitination. E3 ubiquitin-protein ligase that participates in multiple biological processes including cell death, glucose metabolism, and in particular, the innate immune response. Mediates 'Lys-63'-linked polyubiquitination of TRAF3 thereby promoting type I interferon production via RIG-I signaling pathway. Can also catalyze 'Lys-48'-linked polyubiquitination and proteasomal degradation of viral proteins such as influenza virus PB2. Acts as a negative feedback regulator of TLR7- and TLR9-triggered signaling. Mechanistically, promotes the 'Lys-48'-linked ubiquitination of IRF7 and induces its degradation via a proteasome-dependent pathway. Reduces FGFR1-dependent tyrosine phosphorylation of PKM, inhibiting PKM-dependent lactate production, glucose metabolism, and cell growth. This is E3 ubiquitin-protein ligase TRIM35 (Trim35) from Mus musculus (Mouse).